The primary structure comprises 242 residues: U1 small nuclear ribonucleoprotein C (242 aa).

The Matrin-type; degenerate zinc finger occupies 3 to 35 (YLGDYCDVYLTHDSMSVRKAHNSGRNHLRNVVE). A disordered region spans residues 60–242 (GQASSNPMLQ…SSPGPSQEGK (183 aa)). Composition is skewed to pro residues over residues 90–107 (MLPP…PGAP), 136–149 (PPMP…PLPN), 156–183 (PFPP…PPIP), and 201–213 (PVPP…PGAP). Positions 231 to 242 (PASSPGPSQEGK) are enriched in polar residues.

This sequence belongs to the U1 small nuclear ribonucleoprotein C family. As to quaternary structure, U1 snRNP is composed of the 7 core Sm proteins B/B', D1, D2, D3, E, F and G that assemble in a heptameric protein ring on the Sm site of the small nuclear RNA to form the core snRNP, and at least 3 U1 snRNP-specific proteins U1-70K, U1-A and U1-C. U1-C interacts with U1 snRNA and the 5' splice-site region of the pre-mRNA.

It localises to the nucleus. Its function is as follows. Component of the spliceosomal U1 snRNP, which is essential for recognition of the pre-mRNA 5' splice-site and the subsequent assembly of the spliceosome. U1-C is directly involved in initial 5' splice-site recognition for both constitutive and regulated alternative splicing. The interaction with the 5' splice-site seems to precede base-pairing between the pre-mRNA and the U1 snRNA. Stimulates commitment or early (E) complex formation by stabilizing the base pairing of the 5' end of the U1 snRNA and the 5' splice-site region. This is U1 small nuclear ribonucleoprotein C from Ajellomyces capsulatus (strain G186AR / H82 / ATCC MYA-2454 / RMSCC 2432) (Darling's disease fungus).